The sequence spans 601 residues: NAD(+)--arginine ADP-ribosyltransferase Chelt (601 aa).

The first 18 residues, 1–18, serve as a signal peptide directing secretion; sequence MKTIISLIFIMFPLFVSA. NAD(+)-binding positions include 26 to 43 and glutamate 130; that span reads ADSR…LYPR. Glutamate 130 is a catalytic residue. A disulfide bridge connects residues cysteine 205 and cysteine 220.

The protein belongs to the enterotoxin A family.

It is found in the secreted. The enzyme catalyses L-arginyl-[protein] + NAD(+) = N(omega)-(ADP-D-ribosyl)-L-arginyl-[protein] + nicotinamide + H(+). In terms of biological role, a probable mono(ADP-ribosyl)transferase, it may ADP-ribosylate Arg in target protein(s). Upon expression in yeast cells causes cell death. In Vibrio cholerae, this protein is NAD(+)--arginine ADP-ribosyltransferase Chelt.